A 537-amino-acid chain; its full sequence is Tegument protein BRRF2 (537 aa).

Disordered regions lie at residues 325 to 474 and 486 to 537; these read LALP…EAQD and GLRV…LSVI. Residues 334–347 show a composition bias toward polar residues; that stretch reads KPQQTCSQLTSRGN. A compositionally biased stretch (low complexity) spans 423-441; it reads SSQAAPSSSSVAPVASLSG. A compositionally biased stretch (acidic residues) spans 492 to 517; that stretch reads DEDEDGSEDGEFSDLDLSDSDHEGDE.

It belongs to the lymphocryptovirus BRRF2 family.

It is found in the virion tegument. The protein is Tegument protein BRRF2 of Homo sapiens (Human).